A 1210-amino-acid polypeptide reads, in one-letter code: Inner capsid protein VP3 (1210 aa).

Residues 1-28 (MPRTSRNVRATEVATTAIPPSNAATDTT) are disordered. The C2H2-type zinc-finger motif lies at 113–136 (LRCQQCGAKFSSMTQLAEHVRTEH). The interval 294-319 (PHAGPQVRSVQSQDQQVYSVDSGPDP) is disordered. Positions 299–315 (QVRSVQSQDQQVYSVDS) are enriched in low complexity.

Belongs to the turreted BTV-fold inner capsid family. As to quaternary structure, homodecamer; each decamer is made up of two conformers of VP2, called VP2A and VP2B. 12 homodecamers assemble to form an icosahedral capsid. Interacts with VP6.

Its subcellular location is the virion. Inner capsid protein that self-assembles to form an icosahedral capsid with a T=2 symmetry, which consists of 120 copies of VP2, with channels at each of its five-fold vertices. This capsid constitutes the innermost concentric layer of the viral mature particle. This chain is Inner capsid protein VP3 (S3), found in Aquareovirus A (isolate Chum salmon/Japan/CSRV/1981) (AQRV-A).